The following is a 203-amino-acid chain: MFKKYDSKNSIVLKSILSLGIIYGGTFGIYPKADASTQNSSSVQDKQLQKVEEVPNNSEKALVKKLYDRYSKDTINGKSNKSRNWVYSERPLNENQVRIHLEGTYTVAGRVYTPKRNITLNKEVVTLKELDHIIRFAHISYGLYMGEHLPKGNIVINTKDGGKYTLESHKELQKDRENVKINTADIKNVTFKLVKSVNDIEQV.

Belongs to the staphylococcal/streptococcal toxin family.

The protein localises to the secreted. In terms of biological role, plays a role in the inhibition of the host innate immune system. Inhibits phagocytosis and killing by human neutrophils by interacting with multiple neutrophil surface glycoproteins in a sialic acid-dependent manner. This chain is Enterotoxin-like toxin X, found in Staphylococcus aureus (strain NCTC 8325 / PS 47).